A 92-amino-acid polypeptide reads, in one-letter code: Small ribosomal subunit protein uS19c (92 aa).

The protein belongs to the universal ribosomal protein uS19 family.

The protein localises to the plastid. Its subcellular location is the chloroplast. Protein S19 forms a complex with S13 that binds strongly to the 16S ribosomal RNA. This chain is Small ribosomal subunit protein uS19c, found in Draba nemorosa (Woodland whitlowgrass).